A 652-amino-acid chain; its full sequence is Leucine-rich repeat-containing protein 4 (652 aa).

The first 40 residues, 1–40 (MKLLWQVTVHHTWNAVLLPVVYLTAQVWILCAAIAAAASA), serve as a signal peptide directing secretion. Over 1–526 (MKLLWQVTVH…SLDEVMKTTK (526 aa)) the chain is Extracellular. The 34-residue stretch at 41–74 (GPQNCPSVCSCSNQFSKVVCTRRGLSEVPQGIPS) folds into the LRRNT domain. 2 cysteine pairs are disulfide-bonded: Cys-45–Cys-51 and Cys-49–Cys-60. 9 LRR repeats span residues 75–96 (NTRY…TFRH), 99–120 (HLEV…AFNG), 123–144 (SLNT…AFEY), 147–168 (KLRE…AFNR), 171–193 (SLMR…AFEG), 196–217 (NLKY…TPLV), 218–239 (GLEE…SFHG), 242–263 (SLKK…AFDG), and 266–287 (SLVE…LFTP). Residues 299 to 351 (NPWNCDCDILWLAWWLREYIPTNSTCCGRCHAPMHMRGRYLVEVDQASFQCSA) form the LRRCT domain. 2 disulfides stabilise this stretch: Cys-303–Cys-328 and Cys-305–Cys-349. N-linked (GlcNAc...) asparagine glycosylation is found at Asn-321 and Asn-362. In terms of domain architecture, Ig-like C2-type spans 352–441 (PFIMDAPRDL…SNASAYLNVS (90 aa)). A disulfide bridge connects residues Cys-373 and Cys-423. Residues 527-547 (IIIGCFVAVTLLAAAMLIVFY) traverse the membrane as a helical segment. Residues 548–652 (KLRKRHQQRS…TKDKVQETQI (105 aa)) lie on the Cytoplasmic side of the membrane.

As to quaternary structure, interacts (via LRR repeats) with NTNG2. Interacts with DLG4. Found in a complex with NMDA receptors. N-glycosylated. In terms of tissue distribution, mainly expressed in the brain. Expression is concentrated in the olfactory bulb, cortex, hippocampus and cerebellum in adult brain. Detected both embryonically and postnatally with stronger expression in postnatal stages.

The protein localises to the membrane. Its subcellular location is the postsynaptic cell membrane. Its function is as follows. Synaptic adhesion protein. Regulates the formation of exitatory synapses through the recruitment of pre-and-postsynaptic proteins. Organize the lamina/pathway-specific differentiation of dendrites. Plays an important role for auditory synaptic responses. Involved in the suppression of glioma. This Rattus norvegicus (Rat) protein is Leucine-rich repeat-containing protein 4 (Lrrc4).